We begin with the raw amino-acid sequence, 624 residues long: Chaperone protein HtpG (624 aa).

An a; substrate-binding region spans residues 1–336 (MKGQETRGFQ…SSDLSLNVSR (336 aa)). Residues 337 to 552 (EILQDSTVTR…ADEMSTQMAK (216 aa)) form a b region. The tract at residues 553 to 624 (LFAAAGQKVP…IRRMNQLLVS (72 aa)) is c.

This sequence belongs to the heat shock protein 90 family. As to quaternary structure, homodimer.

It localises to the cytoplasm. In terms of biological role, molecular chaperone. Has ATPase activity. This Shigella dysenteriae serotype 1 (strain Sd197) protein is Chaperone protein HtpG.